An 85-amino-acid chain; its full sequence is Small cysteine and glycine repeat-containing protein 5 (85 aa).

A 10 X 2 AA repeats of CG region spans residues 4-69 (CGCGGCGGCG…TCCSCGCGCG (66 aa)).

Belongs to the KRTAP type 28 family.

Its function is as follows. In the hair cortex, hair keratin intermediate filaments are embedded in an interfilamentous matrix, consisting of hair keratin-associated proteins (KRTAP), which are essential for the formation of a rigid and resistant hair shaft through their extensive disulfide bond cross-linking with abundant cysteine residues of hair keratins. The matrix proteins include the high-sulfur and high-glycine-tyrosine keratins. The protein is Small cysteine and glycine repeat-containing protein 5 of Homo sapiens (Human).